The sequence spans 210 residues: Uridine kinase (210 aa).

14–21 (GGSGSGKT) is an ATP binding site.

The protein belongs to the uridine kinase family.

The protein localises to the cytoplasm. It catalyses the reaction uridine + ATP = UMP + ADP + H(+). The enzyme catalyses cytidine + ATP = CMP + ADP + H(+). It functions in the pathway pyrimidine metabolism; CTP biosynthesis via salvage pathway; CTP from cytidine: step 1/3. Its pathway is pyrimidine metabolism; UMP biosynthesis via salvage pathway; UMP from uridine: step 1/1. The chain is Uridine kinase from Deinococcus radiodurans (strain ATCC 13939 / DSM 20539 / JCM 16871 / CCUG 27074 / LMG 4051 / NBRC 15346 / NCIMB 9279 / VKM B-1422 / R1).